We begin with the raw amino-acid sequence, 115 residues long: NAD(P)H-quinone oxidoreductase subunit M (115 aa).

The protein belongs to the complex I NdhM subunit family. NDH-1 can be composed of about 15 different subunits; different subcomplexes with different compositions have been identified which probably have different functions.

It localises to the cellular thylakoid membrane. The enzyme catalyses a plastoquinone + NADH + (n+1) H(+)(in) = a plastoquinol + NAD(+) + n H(+)(out). It catalyses the reaction a plastoquinone + NADPH + (n+1) H(+)(in) = a plastoquinol + NADP(+) + n H(+)(out). In terms of biological role, NDH-1 shuttles electrons from an unknown electron donor, via FMN and iron-sulfur (Fe-S) centers, to quinones in the respiratory and/or the photosynthetic chain. The immediate electron acceptor for the enzyme in this species is believed to be plastoquinone. Couples the redox reaction to proton translocation, and thus conserves the redox energy in a proton gradient. Cyanobacterial NDH-1 also plays a role in inorganic carbon-concentration. The chain is NAD(P)H-quinone oxidoreductase subunit M from Trichodesmium erythraeum (strain IMS101).